The primary structure comprises 217 residues: Large ribosomal subunit protein uL3 (217 aa).

This sequence belongs to the universal ribosomal protein uL3 family. In terms of assembly, part of the 50S ribosomal subunit. Forms a cluster with proteins L14 and L19.

One of the primary rRNA binding proteins, it binds directly near the 3'-end of the 23S rRNA, where it nucleates assembly of the 50S subunit. In Brachyspira hyodysenteriae (strain ATCC 49526 / WA1), this protein is Large ribosomal subunit protein uL3.